The following is a 364-amino-acid chain: Succinyl-diaminopimelate desuccinylase (364 aa).

A Zn(2+)-binding site is contributed by His64. Asp66 is an active-site residue. Asp95 contacts Zn(2+). The active-site Proton acceptor is the Glu125. Glu126, Glu154, and His339 together coordinate Zn(2+).

It belongs to the peptidase M20A family. DapE subfamily. Homodimer. Zn(2+) serves as cofactor. The cofactor is Co(2+).

It carries out the reaction N-succinyl-(2S,6S)-2,6-diaminopimelate + H2O = (2S,6S)-2,6-diaminopimelate + succinate. The protein operates within amino-acid biosynthesis; L-lysine biosynthesis via DAP pathway; LL-2,6-diaminopimelate from (S)-tetrahydrodipicolinate (succinylase route): step 3/3. In terms of biological role, catalyzes the hydrolysis of N-succinyl-L,L-diaminopimelic acid (SDAP), forming succinate and LL-2,6-diaminopimelate (DAP), an intermediate involved in the bacterial biosynthesis of lysine and meso-diaminopimelic acid, an essential component of bacterial cell walls. The chain is Succinyl-diaminopimelate desuccinylase from Nitratiruptor sp. (strain SB155-2).